The chain runs to 109 residues: MTMKLIWDKFYVSIIFVLTCIILGIILMCTVVGGGNDYSEVNVSEGDSLWALADQYAGKSDMAKADFVSWVEKENNLADGHVEAGDSVVIPVHKTKLIKSDSTIQLANQ.

The LysM domain maps to 39-90 (SEVNVSEGDSLWALADQYAGKSDMAKADFVSWVEKENNLADGHVEAGDSVVI).

Belongs to the YneA family.

Its subcellular location is the cytoplasm. Functionally, inhibits cell division during the SOS response. Affects a later stage of the cell division protein assembly, after the assembly of the Z ring, by probably suppressing recruitment of FtsL and/or DivIC to the division machinery. This Listeria monocytogenes serotype 4b (strain CLIP80459) protein is Cell division suppressor protein YneA.